Reading from the N-terminus, the 821-residue chain is Calpain-3 (821 aa).

The disordered stretch occupies residues 1-37 (MPTVISPTVAPRTGAEPRSPGPVPHPAQGKTTEAGGG). In terms of domain architecture, Calpain catalytic spans 74–417 (LYLDPEFPPD…FTKLEICNLT (344 aa)). Active-site residues include C129, H334, and N358. The interval 418-586 (ADALESDKLQ…KRNLSEEAEN (169 aa)) is domain III. A linker region spans residues 587-649 (TISVDRPVKK…RPGHTDQESE (63 aa)). The tract at residues 603–651 (IFVSDRANSNKELGVDQEAEEGKDKTGPDKQGESPQPRPGHTDQESEEQ) is disordered. The segment covering 622–634 (EEGKDKTGPDKQG) has biased composition (basic and acidic residues). 4 consecutive EF-hand domains span residues 649–683 (EEQQ…VVNK), 692–725 (FTLE…KKIK), 722–757 (KKIK…AGFH), and 787–821 (VRLE…TMYA). The tract at residues 650–820 (EQQQFRNIFR…VLEWLQLTMY (171 aa)) is domain IV. Residues A662, D665, E667, E672, D705, D707, S709, R711, E716, D735, D737, S739, T741, E746, D800, D802, D804, and I806 each coordinate Ca(2+).

This sequence belongs to the peptidase C2 family. As to quaternary structure, homodimer; via EF-hand domain 4. Interacts with TTN/titin. Interacts with CMYA5; this interaction, which results in CMYA5 proteolysis, may protect CAPN3 from autolysis. Interacts with SIMC1. Interacts with UTP25; the interaction is required for CAPN3 translocation to the nucleolus. Skeletal muscle.

Its subcellular location is the cytoplasm. The protein resides in the nucleus. It localises to the nucleolus. The enzyme catalyses Broad endopeptidase activity.. Activated by micromolar concentrations of calcium and inhibited by calpastatin. Its function is as follows. Calcium-regulated non-lysosomal thiol-protease. Proteolytically cleaves CTBP1 at 'His-399'. Mediates, with UTP25, the proteasome-independent degradation of p53/TP53. The sequence is that of Calpain-3 (Capn3) from Rattus norvegicus (Rat).